We begin with the raw amino-acid sequence, 474 residues long: Protein FAM161A (474 aa).

Disordered regions lie at residues Ser78–Ile126, Gln185–Glu210, and Arg308–Leu364. A coiled-coil region spans residues Arg188 to Ala250. Positions Lys274–Gln454 are required for interaction with CFAP418. Polar residues predominate over residues Leu325 to Thr335. Glycyl lysine isopeptide (Lys-Gly) (interchain with G-Cter in SUMO2) cross-links involve residues Lys397 and Lys413. Positions Leu412–Arg474 are disordered. Basic residues predominate over residues Pro422–Ala431. Residues Arg450–Ala468 are compositionally biased toward basic and acidic residues.

It belongs to the FAM161 family. As to quaternary structure, interacts (via central region) with CFAP418 (via N-terminus); the interaction is direct. Interacts (via C-terminus) with microtubules. Interacts with LCA5. Interacts with CEP290. Interacts with SDCCAG8. Interacts with FAM161B. Interacts with POC1B. Interacts with CEP78. Forms a microtubule-associated complex with POC5, CETN2 and POC1B. Interacts with CCDC15. In terms of tissue distribution, expressed in the retina and kidney.

The protein localises to the cytoplasm. It localises to the cytoskeleton. Its subcellular location is the cilium basal body. The protein resides in the cell projection. It is found in the cilium. The protein localises to the microtubule organizing center. It localises to the centrosome. Its subcellular location is the centriole. Functionally, involved in ciliogenesis. The sequence is that of Protein FAM161A from Rattus norvegicus (Rat).